Reading from the N-terminus, the 98-residue chain is MMCGAPSAVQPATAETQDIADQVRSQLEEKENKKFPVFKAVSFKSQVVAGTNYFIKVHVGDEDFVHLRVFKSLPHENKPLTLSDYQTNKAKHDELSYF.

N-acetylmethionine is present on Met-1. Residues 46–50 carry the Secondary area of contact motif; sequence QVVAG.

Belongs to the cystatin family. Able to form dimers stabilized by noncovalent forces.

The protein resides in the cytoplasm. It localises to the nucleus. In terms of biological role, this is an intracellular thiol proteinase inhibitor. Tightly binding reversible inhibitor of cathepsins L, H and B. This Macaca fuscata fuscata (Japanese macaque) protein is Cystatin-B (CSTB).